The following is a 91-amino-acid chain: MIDKQQVISDNAAGANDTGSTAVQVALLTARINNLAGHLQTNKKDKAGQRGLQLMNGQRRRLLKYLERTDYDAYIALTDKLGIRRGQRIVR.

It belongs to the universal ribosomal protein uS15 family. Part of the 30S ribosomal subunit. Forms a bridge to the 50S subunit in the 70S ribosome, contacting the 23S rRNA.

One of the primary rRNA binding proteins, it binds directly to 16S rRNA where it helps nucleate assembly of the platform of the 30S subunit by binding and bridging several RNA helices of the 16S rRNA. In terms of biological role, forms an intersubunit bridge (bridge B4) with the 23S rRNA of the 50S subunit in the ribosome. The protein is Small ribosomal subunit protein uS15 of Deinococcus radiodurans (strain ATCC 13939 / DSM 20539 / JCM 16871 / CCUG 27074 / LMG 4051 / NBRC 15346 / NCIMB 9279 / VKM B-1422 / R1).